The following is a 753-amino-acid chain: 5-methyltetrahydropteroyltriglutamate--homocysteine methyltransferase (753 aa).

Residues 17-20 and Lys-117 each bind 5-methyltetrahydropteroyltri-L-glutamate; that span reads RELK. Residues 431-433 and Glu-484 each bind L-homocysteine; that span reads IGS. L-methionine contacts are provided by residues 431-433 and Glu-484; that span reads IGS. 5-methyltetrahydropteroyltri-L-glutamate-binding positions include 515-516 and Trp-561; that span reads RC. An L-homocysteine-binding site is contributed by Asp-599. Asp-599 is a binding site for L-methionine. Glu-605 serves as a coordination point for 5-methyltetrahydropteroyltri-L-glutamate. Residues His-641, Cys-643, and Glu-665 each coordinate Zn(2+). The active-site Proton donor is the His-694. Residue Cys-726 coordinates Zn(2+).

Belongs to the vitamin-B12 independent methionine synthase family. The cofactor is Zn(2+).

It carries out the reaction 5-methyltetrahydropteroyltri-L-glutamate + L-homocysteine = tetrahydropteroyltri-L-glutamate + L-methionine. The protein operates within amino-acid biosynthesis; L-methionine biosynthesis via de novo pathway; L-methionine from L-homocysteine (MetE route): step 1/1. In terms of biological role, catalyzes the transfer of a methyl group from 5-methyltetrahydrofolate to homocysteine resulting in methionine formation. This chain is 5-methyltetrahydropteroyltriglutamate--homocysteine methyltransferase, found in Escherichia coli O6:K15:H31 (strain 536 / UPEC).